The following is a 370-amino-acid chain: 1-propanol dehydrogenase PduQ (370 aa).

It belongs to the iron-containing alcohol dehydrogenase family. In terms of assembly, interacts with PduP, probably via the N-terminus of PduQ. It depends on Fe cation as a cofactor.

It localises to the bacterial microcompartment. The catalysed reaction is 1-propanol + NAD(+) = propanal + NADH + H(+). It functions in the pathway polyol metabolism; 1,2-propanediol degradation. With respect to regulation, enzyme is oxygen sensitive. Its function is as follows. An iron-dependent alcohol dehydrogenase required for optimal 1,2-propanediol (1,2-PD) degradation. NAD(+) and NADH are regenerated internally within the bacterial microcompartment (BMC) dedicated to 1,2-PD degradation by the PduP and PduQ enzymes, which reduce NAD(+) and oxidize NADH respectively, although there must also be cofactor transport across the BMC. Functionally, the 1,2-PD-specific bacterial microcompartment (BMC) concentrates low levels of 1,2-PD catabolic enzymes, concentrates volatile reaction intermediates thus enhancing pathway flux and keeps the level of toxic, mutagenic propionaldehyde low. This is 1-propanol dehydrogenase PduQ from Salmonella typhimurium (strain LT2 / SGSC1412 / ATCC 700720).